Reading from the N-terminus, the 553-residue chain is Solute carrier family 22 member 2 (553 aa).

Residues 1-21 (MPTVDDILEHIGEFHLFQKQT) are Cytoplasmic-facing. A helical transmembrane segment spans residues 22-42 (FFLLALLSGAFTPIYVGIVFL). Topologically, residues 43–150 (GFTPNHHCRS…LVCAHSWMLD (108 aa)) are extracellular. N-linked (GlcNAc...) asparagine glycosylation is present at Asn-71. Residues 151-171 (LFQSLVNVGFFIGAVGIGYLA) form a helical membrane-spanning segment. Residues 172 to 177 (DRFGRK) lie on the Cytoplasmic side of the membrane. A helical membrane pass occupies residues 178–198 (FCLLVTILINAISGVLMAISP). At 199-210 (NYAWMLVFRFLQ) the chain is on the extracellular side. The chain crosses the membrane as a helical span at residues 211–231 (GLVSKAGWLIGYILITEFVGL). The Cytoplasmic portion of the chain corresponds to 232–238 (GYRRTVG). Residues 239-259 (ICYQIAFTVGLLILAGVAYAL) form a helical membrane-spanning segment. At 260 to 263 (PNWR) the chain is on the extracellular side. A helical transmembrane segment spans residues 264-284 (WLQFAVTLPNFCFLLYFWCIP). The Proline-rich sequence signature appears at 284–288 (PESPR). The Cytoplasmic segment spans residues 285 to 348 (ESPRWLISQN…VRTPQIRKHT (64 aa)). The helical transmembrane segment at 349-369 (LILMYNWFTSSVLYQGLIMHM) threads the bilayer. The Extracellular segment spans residues 370 to 375 (GLAGDN). A helical membrane pass occupies residues 376-396 (IYLDFFYSALVEFPAAFIIIL). The Cytoplasmic portion of the chain corresponds to 397 to 404 (TIDRIGRR). Residues 405–425 (YPWAVSNMVAGAACLASVFIP) form a helical membrane-spanning segment. The Extracellular segment spans residues 426 to 432 (DDLQWLK). The helical transmembrane segment at 433–453 (ITVACLGRMGITIAYEMVCLV) threads the bilayer. The Cytoplasmic portion of the chain corresponds to 454 to 464 (NAELYPTYIRN). A helical transmembrane segment spans residues 465–485 (LAVLVCSSMCDIGGIVTPFLV). Residues 486 to 494 (YRLTDIWLE) lie on the Extracellular side of the membrane. Residues 495-515 (FPLVVFAVVGLVAGGLVLLLP) traverse the membrane as a helical segment. Over 516–553 (ETKGKALPETIEDAEKMQRPRKKKEKRIYLQVKKAELS) the chain is Cytoplasmic.

The protein belongs to the major facilitator (TC 2.A.1) superfamily. Organic cation transporter (TC 2.A.1.19) family. In terms of processing, tyrosine phosphorylated by tyrosine-protein kinase YES1. Expressed in kidney and ureter. To a lower extent, also expressed in brain and embryo.

It is found in the basolateral cell membrane. Its subcellular location is the basal cell membrane. The protein localises to the apical cell membrane. The catalysed reaction is (R)-noradrenaline(out) = (R)-noradrenaline(in). It catalyses the reaction (R)-adrenaline(out) = (R)-adrenaline(in). The enzyme catalyses serotonin(out) = serotonin(in). It carries out the reaction dopamine(out) = dopamine(in). The catalysed reaction is histamine(out) = histamine(in). It catalyses the reaction thiamine(in) = thiamine(out). The enzyme catalyses creatinine(in) = creatinine(out). It carries out the reaction 1-methylnicotinamide(out) = 1-methylnicotinamide(in). The catalysed reaction is guanidine(out) = guanidine(in). It catalyses the reaction choline(out) = choline(in). The enzyme catalyses agmatine(out) = agmatine(in). It carries out the reaction putrescine(out) = putrescine(in). The catalysed reaction is spermidine(in) = spermidine(out). It catalyses the reaction tyramine(in) = tyramine(out). The enzyme catalyses L-histidyl-L-proline diketopiperazine(in) = L-histidyl-L-proline diketopiperazine(out). It carries out the reaction (R)-salsolinol(in) = (R)-salsolinol(out). The catalysed reaction is N-methyl-(R)-salsolinol(in) = N-methyl-(R)-salsolinol(out). It catalyses the reaction acetylcholine(in) = acetylcholine(out). The enzyme catalyses prostaglandin F2alpha(out) = prostaglandin F2alpha(in). It carries out the reaction prostaglandin E2(out) = prostaglandin E2(in). With respect to regulation, tyrosine phosphorylation of the transporter leads to activation of the transport activity. TEA uptake is activated by tyrosine phosphorylation. Inhibited by cGMP, most likely through a cGMP-binding protein that interacts with OCT2. Functionally, electrogenic voltage-dependent transporter that mediates the transport of a variety of organic cations such as endogenous bioactive amines, cationic drugs and xenobiotics. Functions as a Na(+)-independent, bidirectional uniporter. Cation cellular uptake or release is driven by the electrochemical potential, i.e. membrane potential and concentration gradient. However, may also engage electroneutral cation exchange when saturating concentrations of cation substrates are reached. Predominantly expressed at the basolateral membrane of hepatocytes and proximal tubules and involved in the uptake and disposition of cationic compounds by hepatic and renal clearance from the blood flow. Implicated in monoamine neurotransmitters uptake such as histamine, dopamine, adrenaline/epinephrine, noradrenaline/norepinephrine, serotonin and tyramine, thereby supporting a physiological role in the central nervous system by regulating interstitial concentrations of neurotransmitters. Also capable of transporting dopaminergic neuromodulators cyclo(his-pro), salsolinol and N-methyl-salsolinol, thereby involved in the maintenance of dopaminergic cell integrity in the central nervous system. Mediates the bidirectional transport of acetylcholine (ACh) at the apical membrane of ciliated cell in airway epithelium, thereby playing a role in luminal release of ACh from bronchial epithelium. Also transports guanidine and endogenous monoamines such as vitamin B1/thiamine, creatinine and N-1-methylnicotinamide (NMN). Mediates the uptake and efflux of quaternary ammonium compound choline. Mediates the bidirectional transport of polyamine agmatine and the uptake of polyamines putrescine and spermidine. Able to transport non-amine endogenous compounds such as prostaglandin E2 (PGE2) and prostaglandin F2-alpha (PGF2-alpha). Also involved in the uptake of xenobiotic 4-(4-(dimethylamino)styryl)-N-methylpyridinium (ASP). May contribute to regulate the transport of organic compounds in testis across the blood-testis-barrier. This is Solute carrier family 22 member 2 from Mus musculus (Mouse).